The primary structure comprises 791 residues: uncharacterized protein (791 aa).

The interval 267-288 (APGESSAQSSYEQSTRAGDSAP) is disordered. Residues 271-283 (SSAQSSYEQSTRA) are compositionally biased toward polar residues.

This is an uncharacterized protein from Treponema pallidum (strain Nichols).